The primary structure comprises 89 residues: Small ribosomal subunit protein bS20 (89 aa).

Composition is skewed to basic residues over residues 1–10 and 17–29; these read MANIKSKIKS and ARKR…SRVK. The disordered stretch occupies residues 1-29; sequence MANIKSKIKSIKTMEKARKRNSMIKSRVK.

This sequence belongs to the bacterial ribosomal protein bS20 family.

Its function is as follows. Binds directly to 16S ribosomal RNA. The sequence is that of Small ribosomal subunit protein bS20 from Mycoplasmopsis pulmonis (strain UAB CTIP) (Mycoplasma pulmonis).